We begin with the raw amino-acid sequence, 303 residues long: MALDFLAGCAGGVAGVLVGHPFDTVKVRLQVQSVEKPQYRGTLHCFKSIIKQESVLGLYKGLGSPLMGLTFINALVFGVQGNTLRALGHDSPLNQFLAGAAAGAIQCVICCPMELAKTRLQLQDAGPARTYKGSLDCLAQIYGHEGLRGVNRGMVSTLLRETPSFGVYFLTYDALTRALGCEPGDRLLVPKLLLAGGTSGIVSWLSTYPVDVVKSRLQADGLRGAPRYRGILDCVHQSYRAEGWRVFTRGLASTLLRAFPVNAATFATVTVVLTYARGEEAGPEGEAVPAAPAGPALAQPSSL.

6 helical membrane-spanning segments follow: residues 2-22 (ALDF…GHPF), 61-81 (GLGS…GVQG), 96-116 (FLAG…MELA), 153-172 (GMVS…FLTY), 187-207 (LLVP…WLST), and 255-275 (LLRA…VLTY). 3 Solcar repeats span residues 2-86 (ALDF…TLRA), 90-178 (DSPL…LTRA), and 185-275 (DRLL…VLTY). Residues 282 to 303 (GPEGEAVPAAPAGPALAQPSSL) form a disordered region. The span at 284-303 (EGEAVPAAPAGPALAQPSSL) shows a compositional bias: low complexity.

It belongs to the mitochondrial carrier (TC 2.A.29) family.

The protein resides in the mitochondrion inner membrane. It carries out the reaction L-lysine(out) + L-arginine(in) = L-lysine(in) + L-arginine(out). It catalyses the reaction L-histidine(out) + L-arginine(in) = L-histidine(in) + L-arginine(out). The catalysed reaction is L-ornithine(in) + L-arginine(out) = L-ornithine(out) + L-arginine(in). The enzyme catalyses L-homoarginine(in) + L-arginine(out) = L-homoarginine(out) + L-arginine(in). It carries out the reaction N(omega)-methyl-L-arginine(in) + L-arginine(out) = N(omega)-methyl-L-arginine(out) + L-arginine(in). It catalyses the reaction L-arginine(in) = L-arginine(out). The catalysed reaction is L-lysine(in) = L-lysine(out). The enzyme catalyses L-ornithine(in) = L-ornithine(out). It carries out the reaction L-histidine(out) = L-histidine(in). Functionally, mitochondrial transporter of arginine, lysine, homoarginine, methylarginine and, to a much lesser extent, ornithine and histidine. Does not transport carnitine nor acylcarnitines. Functions by both counter-exchange and uniport mechanisms. Plays a physiological role in the import of basic amino acids into mitochondria for mitochondrial protein synthesis and amino acid degradation. The sequence is that of Mitochondrial basic amino acids transporter from Homo sapiens (Human).